Consider the following 356-residue polypeptide: Chitin elicitor-binding protein (356 aa).

The signal sequence occupies residues 1–28 (MASLTAALATPAAAALLLLVLLAAPASA). N-linked (GlcNAc...) asparagine glycosylation is present at Asn-30. Disulfide bonds link Cys-33–Cys-100, Cys-41–Cys-164, Cys-98–Cys-162, and Cys-100–Cys-164. Position 50–51 (50–51 (PN)) interacts with chitin. N-linked (GlcNAc...) asparagine glycosylation is found at Asn-63 and Asn-89. LysM domains lie at 111-158 (PIYV…TLWI) and 175-219 (LAYS…ILDV). Chitin contacts are provided by residues 117–123 (PQDGLDA), Asn-142, 145–152 (PDPNKINV), Thr-155, and Gly-182. Asn-151 carries an N-linked (GlcNAc...) asparagine glycan. A glycan (N-linked (GlcNAc...) asparagine) is linked at Asn-184. Residues Ser-186 and 211–213 (LQM) contribute to the chitin site. Disulfide bonds link Cys-224–Cys-257 and Cys-252–Cys-274. Asn-265, Asn-281, Asn-290, Asn-306, and Asn-319 each carry an N-linked (GlcNAc...) asparagine glycan. A helical membrane pass occupies residues 336 to 356 (RSMWSMSVISFHMVLIIICFL).

Forms homooligomer. Interacts with CERK1. Binds to chitin oligosaccharide elicitor. Interacts with LYP4 and LYP6. In terms of processing, N-glycosylated. Expressed in seedlings, roots, shoots, stems and flowers.

The protein localises to the cell membrane. Its function is as follows. Chitin elicitor-binding protein involved in the perception and transduction of chitin oligosaccharide elicitor signal for defense responses. The protein is Chitin elicitor-binding protein of Oryza sativa subsp. japonica (Rice).